The sequence spans 263 residues: Thiazole synthase (263 aa).

Lysine 100 (schiff-base intermediate with DXP) is an active-site residue. Residues glycine 161, 187–188, and 209–210 each bind 1-deoxy-D-xylulose 5-phosphate; these read AG and NT.

The protein belongs to the ThiG family. In terms of assembly, homotetramer. Forms heterodimers with either ThiH or ThiS.

The protein resides in the cytoplasm. The catalysed reaction is [ThiS sulfur-carrier protein]-C-terminal-Gly-aminoethanethioate + 2-iminoacetate + 1-deoxy-D-xylulose 5-phosphate = [ThiS sulfur-carrier protein]-C-terminal Gly-Gly + 2-[(2R,5Z)-2-carboxy-4-methylthiazol-5(2H)-ylidene]ethyl phosphate + 2 H2O + H(+). Its pathway is cofactor biosynthesis; thiamine diphosphate biosynthesis. In terms of biological role, catalyzes the rearrangement of 1-deoxy-D-xylulose 5-phosphate (DXP) to produce the thiazole phosphate moiety of thiamine. Sulfur is provided by the thiocarboxylate moiety of the carrier protein ThiS. In vitro, sulfur can be provided by H(2)S. This Shouchella clausii (strain KSM-K16) (Alkalihalobacillus clausii) protein is Thiazole synthase.